The sequence spans 393 residues: Venom metalloproteinase BumaMPs1 (393 aa).

The N-terminal stretch at 1–15 (MFVHLLVLLFAAVEA) is a signal peptide. A glycan (N-linked (GlcNAc...) asparagine) is linked at asparagine 158. Residues 167–377 (KCVKIEYVFV…RVEELITRRK (211 aa)) enclose the Peptidase M12B domain. Position 323 (histidine 323) interacts with Zn(2+). Glutamate 324 is an active-site residue. Residues histidine 327 and histidine 333 each coordinate Zn(2+). Residues 378–393 (INHCIVETCDGKRKRN) form a disintegrin-like domain region.

This sequence belongs to the venom metalloproteinase (M12B) family. Requires Zn(2+) as cofactor. In terms of processing, contains several disulfide bonds. Expressed by the venom gland.

The protein resides in the secreted. Metalloprotease. This chain is Venom metalloproteinase BumaMPs1, found in Olivierus martensii (Manchurian scorpion).